Here is a 142-residue protein sequence, read N- to C-terminus: Biogenesis of lysosome-related organelles complex 1 subunit 2 (142 aa).

Residues 1–33 are disordered; sequence MAAAAEGVLATRSDEPARDDAAVETAEEAKEPA. Ala-2 carries the N-acetylalanine modification. The span at 12–33 shows a compositional bias: basic and acidic residues; that stretch reads RSDEPARDDAAVETAEEAKEPA. The stretch at 79–127 forms a coiled coil; the sequence is EMKDIAINISRNLKDLNQKYAGLQPYLDQINVIEEQVAALEQAAYKLDA.

Belongs to the BLOC1S2 family. As to quaternary structure, component of the biogenesis of lysosome-related organelles complex 1 (BLOC-1) composed of BLOC1S1, BLOC1S2, BLOC1S3, BLOC1S4, BLOC1S5, BLOC1S6, DTNBP1/BLOC1S7 and SNAPIN/BLOC1S8. Octamer composed of one copy each BLOC1S1, BLOC1S2, BLOC1S3, BLOC1S4, BLOC1S5, BLOC1S6, DTNBP1/BLOC1S7 and SNAPIN/BLOC1S8. Interacts directly with BLOC1S1, BLOC1S3, BLOC1S4, BLOC1S5 and SNAPIN. The BLOC-1 complex associates with the AP-3 protein complex and membrane protein cargos. Component of the BLOC-one-related complex (BORC) which is composed of BLOC1S1, BLOC1S2, BORCS5, BORCS6, BORCS7, BORCS8, KXD1 and SNAPIN. Interacts with gamma-tubulin. Interacts with IFT57. In terms of tissue distribution, isoform 1 and isoform 2 are widely expressed. Expressed in various malignant tumor tissues (at protein level).

Its subcellular location is the cytoplasm. It is found in the cytoskeleton. The protein localises to the microtubule organizing center. The protein resides in the centrosome. It localises to the lysosome membrane. Its function is as follows. Component of the BLOC-1 complex, a complex that is required for normal biogenesis of lysosome-related organelles (LRO), such as platelet dense granules and melanosomes. In concert with the AP-3 complex, the BLOC-1 complex is required to target membrane protein cargos into vesicles assembled at cell bodies for delivery into neurites and nerve terminals. The BLOC-1 complex, in association with SNARE proteins, is also proposed to be involved in neurite extension. As part of the BORC complex may play a role in lysosomes movement and localization at the cell periphery. Associated with the cytosolic face of lysosomes, the BORC complex may recruit ARL8B and couple lysosomes to microtubule plus-end-directed kinesin motor. May play a role in cell proliferation. This is Biogenesis of lysosome-related organelles complex 1 subunit 2 (BLOC1S2) from Homo sapiens (Human).